A 558-amino-acid polypeptide reads, in one-letter code: Armadillo repeat-containing X-linked protein 5 (558 aa).

Composition is skewed to basic and acidic residues over residues 1-14 (MVDS…RGKA) and 139-156 (KSHD…REET). Disordered stretches follow at residues 1 to 35 (MVDS…GKTQ) and 139 to 165 (KSHD…SSDE). The ARM 1 repeat unit spans residues 300 to 339 (CKSRGFSLEPKEFDKLVALLKLTKDPFIHEIATMIMGISP). Residues 369 to 388 (HPGALSMVDDSSESSEEPKS) are disordered. 3 ARM repeats span residues 422 to 461 (IKFE…CLSK), 463 to 503 (HANT…NINF), and 520 to 558 (SELI…ILKL).

Belongs to the eutherian X-chromosome-specific Armcx family.

The sequence is that of Armadillo repeat-containing X-linked protein 5 (ARMCX5) from Homo sapiens (Human).